Consider the following 62-residue polypeptide: uncharacterized protein (62 aa).

This is an uncharacterized protein from Solanum tuberosum (Potato).